The sequence spans 817 residues: Myosin-A (817 aa).

Serine 19 is modified (phosphoserine). The 675-residue stretch at 97 to 771 (MSFGDIGLLN…GAKMLSKIQR (675 aa)) folds into the Myosin motor domain. 191-198 (GESGAGKT) contacts ATP. The interval 661–671 (PHFIRCIKPNE) is actin-binding. The interval 773–817 (KLVEWENCVSVIEAAIMKYKHKQNVENNVSSLMRVQAHIRKRMVA) is tail.

Belongs to the TRAFAC class myosin-kinesin ATPase superfamily. Myosin family. As to quaternary structure, interacts with ACT1.

It localises to the cell membrane. In terms of biological role, myosins are actin-based motor molecules with ATPase activity. Unconventional myosins serve in intracellular movements. Their highly divergent tails are presumed to bind to membranous compartments, which would be moved relative to actin filaments. This chain is Myosin-A, found in Plasmodium yoelii yoelii.